Consider the following 322-residue polypeptide: uncharacterized protein (322 aa).

Composition is skewed to basic residues over residues 1-16 (MPGN…KSGT) and 43-61 (LRPH…RRPV). The disordered stretch occupies residues 1-69 (MPGNSRRRGA…PVKRADETET (69 aa)). S-adenosyl-L-methionine-binding residues include Gly261, Ile281, and Leu290.

This sequence belongs to the class IV-like SAM-binding methyltransferase superfamily. RNA methyltransferase TrmH family.

This is an uncharacterized protein from Mycobacterium bovis (strain ATCC BAA-935 / AF2122/97).